A 284-amino-acid chain; its full sequence is 4-diphosphocytidyl-2-C-methyl-D-erythritol kinase (284 aa).

Lys9 is an active-site residue. Pro90–Ser100 is an ATP binding site. Asp132 is an active-site residue.

The protein belongs to the GHMP kinase family. IspE subfamily.

It catalyses the reaction 4-CDP-2-C-methyl-D-erythritol + ATP = 4-CDP-2-C-methyl-D-erythritol 2-phosphate + ADP + H(+). The protein operates within isoprenoid biosynthesis; isopentenyl diphosphate biosynthesis via DXP pathway; isopentenyl diphosphate from 1-deoxy-D-xylulose 5-phosphate: step 3/6. In terms of biological role, catalyzes the phosphorylation of the position 2 hydroxy group of 4-diphosphocytidyl-2C-methyl-D-erythritol. The protein is 4-diphosphocytidyl-2-C-methyl-D-erythritol kinase of Dehalococcoides mccartyi (strain ATCC BAA-2266 / KCTC 15142 / 195) (Dehalococcoides ethenogenes (strain 195)).